A 162-amino-acid polypeptide reads, in one-letter code: uncharacterized protein (162 aa).

A helical transmembrane segment spans residues 7–27 (LGGVMLFAIVSLMVCGCMVVF).

The protein resides in the membrane. This is an uncharacterized protein from Methanocaldococcus jannaschii (strain ATCC 43067 / DSM 2661 / JAL-1 / JCM 10045 / NBRC 100440) (Methanococcus jannaschii).